A 364-amino-acid chain; its full sequence is Geissoschizine synthase (364 aa).

Cysteine 51 provides a ligand contact to Zn(2+). Asparagine 52 is a binding site for NADP(+). Residues histidine 73, glutamate 74, cysteine 104, cysteine 107, cysteine 110, cysteine 118, and cysteine 168 each coordinate Zn(2+). Residues leucine 194, glycine 196, leucine 197, serine 216, threonine 217, serine 218, lysine 221, arginine 261, valine 280, alanine 282, serine 304, threonine 306, and arginine 351 each coordinate NADP(+).

The protein belongs to the zinc-containing alcohol dehydrogenase family. Class-III subfamily. In terms of assembly, homodimer. Zn(2+) is required as a cofactor. As to expression, expressed in leaf epidermis.

It carries out the reaction (19E)-geissoschizine + NADP(+) = 4,21-dehydrogeissoschizine + NADPH. It functions in the pathway alkaloid biosynthesis. Component of the seco-iridoid and derivatives monoterpenoid indole alkaloids (MIAs, e.g. catharanthine, tabersonine, vincadifformine, vindoline, vincristine, quinine and strychnine) biosynthesis pathway. During the conversion of strictosidine aglycone to geissoschizine, catalyzes iminium reduction on 4,21-dehydrogeissoschizine to produce 19E-geissoschizine, precursor of catharanthine and tabersonine derivatives. May also trigger the production of reactive intermediate used by the HL1, HL2, HL3 and HL4 to form catharanthine, vincadifformine and tabersonine. The sequence is that of Geissoschizine synthase from Catharanthus roseus (Madagascar periwinkle).